A 139-amino-acid polypeptide reads, in one-letter code: Putative pre-16S rRNA nuclease (139 aa).

Belongs to the YqgF nuclease family.

The protein localises to the cytoplasm. Functionally, could be a nuclease involved in processing of the 5'-end of pre-16S rRNA. The protein is Putative pre-16S rRNA nuclease of Streptococcus gordonii (strain Challis / ATCC 35105 / BCRC 15272 / CH1 / DL1 / V288).